Here is a 273-residue protein sequence, read N- to C-terminus: Putative pyruvate, phosphate dikinase regulatory protein (273 aa).

149–156 (GPSRTSKT) serves as a coordination point for ADP.

This sequence belongs to the pyruvate, phosphate/water dikinase regulatory protein family. PDRP subfamily.

The catalysed reaction is N(tele)-phospho-L-histidyl/L-threonyl-[pyruvate, phosphate dikinase] + ADP = N(tele)-phospho-L-histidyl/O-phospho-L-threonyl-[pyruvate, phosphate dikinase] + AMP + H(+). It carries out the reaction N(tele)-phospho-L-histidyl/O-phospho-L-threonyl-[pyruvate, phosphate dikinase] + phosphate + H(+) = N(tele)-phospho-L-histidyl/L-threonyl-[pyruvate, phosphate dikinase] + diphosphate. In terms of biological role, bifunctional serine/threonine kinase and phosphorylase involved in the regulation of the pyruvate, phosphate dikinase (PPDK) by catalyzing its phosphorylation/dephosphorylation. This chain is Putative pyruvate, phosphate dikinase regulatory protein, found in Rickettsia conorii (strain ATCC VR-613 / Malish 7).